The chain runs to 119 residues: Large ribosomal subunit protein bL20 (119 aa).

Belongs to the bacterial ribosomal protein bL20 family.

Its function is as follows. Binds directly to 23S ribosomal RNA and is necessary for the in vitro assembly process of the 50S ribosomal subunit. It is not involved in the protein synthesizing functions of that subunit. The protein is Large ribosomal subunit protein bL20 of Shewanella halifaxensis (strain HAW-EB4).